A 449-amino-acid polypeptide reads, in one-letter code: Probable phosphoglucosamine mutase (449 aa).

The active-site Phosphoserine intermediate is the Ser-101. Positions 101, 239, 241, and 243 each coordinate Mg(2+). Ser-101 is modified (phosphoserine).

It belongs to the phosphohexose mutase family. The cofactor is Mg(2+). Post-translationally, activated by phosphorylation.

It carries out the reaction alpha-D-glucosamine 1-phosphate = D-glucosamine 6-phosphate. In terms of biological role, catalyzes the conversion of glucosamine-6-phosphate to glucosamine-1-phosphate. The sequence is that of Probable phosphoglucosamine mutase from Methanothermobacter thermautotrophicus (strain ATCC 29096 / DSM 1053 / JCM 10044 / NBRC 100330 / Delta H) (Methanobacterium thermoautotrophicum).